Here is a 1003-residue protein sequence, read N- to C-terminus: MASMTMRFHPNSTAVTESVPRRGSVYGFIGYRSSSLFVRTNVIKYRSVKRNLEFRRRSAFSVKCGSGNEAKQKVKDQEVQQEAKTSPSSFAPDTTSIVSSIKYHAEFTPLFSPEKFELPQAFIATAQSVRDALIINWNATYDYYEKLNVKQAYYLSMEFLQGRALLNAIGNLELTGPYAEALSQLSYKLEDVAHQEPDAALGNGGLGRLASCFLDSLATLNYPAWGYGLRYKYGLFKQRITKDGQEEVAEDWLEMGNPWEIVRNDVSYPVRFYGKVVSGSDGKKHWVGGEDIKAVAHDVPIPGYKTRSTINLRLWSTKAASEEFDLNAFNSGRHTEASEALANAEKICYILYPGDESIEGKTLRLKQQYTLCSASLQDIIARFERRSGASVNWEDFPEKVAVQMNDTHPTLCIPELMRILIDIKGLSWKDAWNITQRTVAYTNHTVLPEALEKWSMDLMEKLLPRHVEIIEMIDEELIRTIIAEYGTADSDLLDKKLKEMRILENVELPAEFADILVKTKEATDISSEEVQISKEGGEEEETSKEGGEEEEEKEVGGGREEGDDGKEDEVEKAIAEKDGTVKSSIGDKKKKLPEPVPVPPKLVRMANLCVVGGHAVNGVAEIHSEIVKDDVFNAFYKLWPEKFQNKTNGVTPRRWIRFCNPDLSKIITQWIGTEDWILNTEKLAELRKFADNEDLQTQWREAKRNNKVKVAAFLRERTGYSVSPDSMFDIQVKRIHEYKRQLLNIFGIVYRYKKMKEMNAAERKENFVPRVCIFGGKAFATYVQAKRIVKFITDVGATVNHDPEIGDLLKVIFVPDYNVSVAEMLIPASELSQHISTAGMEASGTSNMKFAMNGCLQIGTLDGANVEIREEVGADNFFLFGAKAREIVGLRKERARGKFVPDPRFEEVKKFVRSGVFGSYNYDELIGSLEGNEGFGRADYFLVGQDFPSYLECQEEVDKAYRDQKKWTRMSILNTAGSSKFSSDRTIHEYAREIWNIEPVKLE.

A chloroplast-targeting transit peptide spans 1 to 64; that stretch reads MASMTMRFHP…RRRSAFSVKC (64 aa). Disordered stretches follow at residues 71–91 and 526–593; these read KQKVKDQEVQQEAKTSPSSFA and SSEE…KKLP. Positions 537–553 are enriched in acidic residues; that stretch reads GEEEETSKEGGEEEEEK. Residues 569-580 show a composition bias toward basic and acidic residues; that stretch reads EVEKAIAEKDGT. Lys849 carries the N6-(pyridoxal phosphate)lysine modification.

This sequence belongs to the glycogen phosphorylase family. Requires pyridoxal 5'-phosphate as cofactor. As to expression, found predominantly in cotyledons and early seed coat.

The protein resides in the plastid. The protein localises to the chloroplast. It localises to the amyloplast. It carries out the reaction [(1-&gt;4)-alpha-D-glucosyl](n) + phosphate = [(1-&gt;4)-alpha-D-glucosyl](n-1) + alpha-D-glucose 1-phosphate. Phosphorylase is an important allosteric enzyme in carbohydrate metabolism. Enzymes from different sources differ in their regulatory mechanisms and in their natural substrates. However, all known phosphorylases share catalytic and structural properties. Its function is as follows. The L isoform exhibits higher affinity for unbranched substrates such as glucan-like amylose and maltodextrin. In Vicia faba (Broad bean), this protein is Alpha-1,4 glucan phosphorylase L isozyme, chloroplastic/amyloplastic (PHO1).